A 411-amino-acid polypeptide reads, in one-letter code: Protein Rv3035 (411 aa).

The sequence is that of Protein Rv3035 from Mycobacterium tuberculosis (strain ATCC 25618 / H37Rv).